The sequence spans 225 residues: LPLCCYLRLVSAEGDPIPEELYEMLSDHSIRSFDDLQRLLHRDSVDEDGAELDLNMTRAHSGVESESSSRGRRSLGSLAAAEPAVIAECKTRTEVFQISRNLIDRTNANFLVWPPCVEVQRCSGCCNNRNVQCRASQVQMRPVQVRKIEIVRKKPVFKKATVTLEDHLACKCETVVTPRPVTRSPGTSREHRAKTPQTRVTVRTVRIRRPPKGKHRKFKHTHDKK.

Residues 1-12 (LPLCCYLRLVSA) form the signal peptide. Residues 13-73 (EGDPIPEELY…ESESSSRGRR (61 aa)) constitute a propeptide, removed in mature form. Asn-55 is a glycosylation site (N-linked (GlcNAc...) asparagine). 3 disulfide bridges follow: Cys-89/Cys-133, Cys-122/Cys-170, and Cys-126/Cys-172. A propeptide spans 183–225 (RSPGTSREHRAKTPQTRVTVRTVRIRRPPKGKHRKFKHTHDKK) (removed in mature form).

The protein belongs to the PDGF/VEGF growth factor family. As to quaternary structure, antiparallel homodimer; disulfide-linked. Antiparallel heterodimer with PDGFA; disulfide-linked. The PDGFB homodimer interacts with PDGFRA and PDGFRB homodimers, and with heterodimers formed by PDGFRA and PDGFRB. The heterodimer composed of PDGFA and PDGFB interacts with PDGFRB homodimers, and with heterodimers formed by PDGFRA and PDGFRB. Interacts with XLKD1. Interacts with LRP1. Interacts with SORL1 (via the N-terminal ectodomain). Interacts with CD82; this interaction inhibits PDGFB-mediated signaling pathway. In terms of tissue distribution, expressed in a distinct subpopulation of smooth muscle cells in injured arteries.

It is found in the secreted. Growth factor that plays an essential role in the regulation of embryonic development, cell proliferation, cell migration, survival and chemotaxis. Potent mitogen for cells of mesenchymal origin. Required for normal proliferation and recruitment of pericytes and vascular smooth muscle cells in the central nervous system, skin, lung, heart and placenta. Required for normal blood vessel development, and for normal development of kidney glomeruli. Plays an important role in wound healing. Signaling is modulated by the formation of heterodimers with PDGFA. This chain is Platelet-derived growth factor subunit B (Pdgfb), found in Rattus norvegicus (Rat).